Consider the following 369-residue polypeptide: Polycomb group protein FERTILIZATION-INDEPENDENT ENDOSPERM (369 aa).

WD repeat units follow at residues 31 to 73, 81 to 123, 126 to 166, 172 to 212, 238 to 275, 287 to 328, and 335 to 368; these read EGKK…AISA, DKEE…IHKS, GHGD…CILI, GHRY…TYVE, IHTNYVDCNRWFGDFILSKSVDNEILLWEPQLKENSPG, VPMC…PVLI, and QSKSVIRQTAMSVDGSTILACCEDGTIWRWDVIT.

This sequence belongs to the WD repeat ESC family. In terms of assembly, interacts directly with MEA. These two proteins are probably indirectly associated with FIS2. In plants, PcG complexes are probably composed of a member of the EZ family (CLF or MEA), FIE, and a member of the VEFS family (FIS2, VRN2 or EMF2). Component of the plant homeodomain / polycomb repressive complex 2 (PHD-PRC2) large complex during prolonged cold, composed of core PRC2 components (VRN2, EZA1, FIE and MSI1), and three related PHD finger proteins (VIL1, VIL2 and VIN3) that mediates histone H3 trimethylation on 'Lys-27' (H3K27me3). Binds to ALP1. Expressed in cauline leaves, root and stems. In the male reproductive organ, it is expressed in the developing anther; and is abundant in microspore mother cells, in microsporocytes and in the tapetum, but is absent from vascular bundles, the connective tissue and the filament. It is also absent from pollen grains at subsequent developmental stages. In the developing female reproductive organs, it is highly expressed in all cells of the young ovules primordium before archesporial differentiation. Then, it is highly expressed in the ovule sporophytic tissue and the megaspore mother cell before meiosis, but is absent from placenta or the developing carpel. Then, it decreases.

The protein resides in the nucleus. Polycomb group (PcG) protein. PcG proteins act by forming multiprotein complexes, which are required to maintain the transcriptionally repressive state of homeotic genes throughout development. PcG proteins are not required to initiate repression, but to maintain it during later stages of development. They probably act via the methylation of histones, rendering chromatin heritably changed in its expressibility. Required to prevent the proliferation of the central cell by repressing unknown target genes before fertilization. Probably also involved in floral repression mechanism established during early plant development. Regulates the anteroposterior organization of the endosperm. Interacts with the promoter and represses the transcription of genes such as PHE1, that are paternally active and maternally silenced. In Arabidopsis thaliana (Mouse-ear cress), this protein is Polycomb group protein FERTILIZATION-INDEPENDENT ENDOSPERM (FIE).